The following is a 439-amino-acid chain: 23S rRNA (uracil(1939)-C(5))-methyltransferase RlmD (439 aa).

The 59-residue stretch at 5–63 folds into the TRAM domain; that stretch reads RKLEHKTYKLNIESFSHEGRGIAHFEDKIIFVSDALPGELVIANRTFSCAKFEEADAKE. [4Fe-4S] cluster is bound by residues Cys-76, Cys-82, Cys-85, and Cys-164. S-adenosyl-L-methionine is bound by residues Gln-271, Phe-300, Asn-305, Glu-321, Asp-348, and Asp-370. Cys-396 serves as the catalytic Nucleophile.

The protein belongs to the class I-like SAM-binding methyltransferase superfamily. RNA M5U methyltransferase family. RlmD subfamily.

The enzyme catalyses uridine(1939) in 23S rRNA + S-adenosyl-L-methionine = 5-methyluridine(1939) in 23S rRNA + S-adenosyl-L-homocysteine + H(+). Its function is as follows. Catalyzes the formation of 5-methyl-uridine at position 1939 (m5U1939) in 23S rRNA. The polypeptide is 23S rRNA (uracil(1939)-C(5))-methyltransferase RlmD (Vesicomyosocius okutanii subsp. Calyptogena okutanii (strain HA)).